We begin with the raw amino-acid sequence, 309 residues long: Prepilin leader peptidase/N-methyltransferase (309 aa).

A helical transmembrane segment spans residues 35 to 55 (MQLAFAIVLGLVVGSFINVVV). Residues Cys96, Cys99, Cys121, and Cys124 each coordinate Zn(2+). 6 consecutive transmembrane segments (helical) span residues 147-167 (LALF…AALL), 183-203 (LTLP…FASL), 207-227 (VIGA…FKLL), 230-250 (IEGI…WLGW), 253-273 (LPQV…VATW), and 288-308 (FLAA…LLLG).

The protein belongs to the peptidase A24 family. The cofactor is Zn(2+).

Its subcellular location is the cell inner membrane. The catalysed reaction is Typically cleaves a -Gly-|-Phe- bond to release an N-terminal, basic peptide of 5-8 residues from type IV prepilin, and then N-methylates the new N-terminal amino group, the methyl donor being S-adenosyl-L-methionine.. Functionally, plays an essential role in type IV pili and type II pseudopili formation by proteolytically removing the leader sequence from substrate proteins and subsequently monomethylating the alpha-amino group of the newly exposed N-terminal phenylalanine. The sequence is that of Prepilin leader peptidase/N-methyltransferase (gspO) from Burkholderia pseudomallei (strain K96243).